The chain runs to 611 residues: Probable inactive purple acid phosphatase 27 (611 aa).

The N-terminal stretch at 1 to 18 is a signal peptide; the sequence is MARNFLLVLLWFIVQVSS. 2 N-linked (GlcNAc...) asparagine glycosylation sites follow: Asn-263 and Asn-271. Asp-293 provides a ligand contact to Fe cation. An N-linked (GlcNAc...) asparagine glycan is attached at Asn-314. Residues Asp-334 and Tyr-337 each contribute to the Fe cation site. Asp-334 is a Zn(2+) binding site. Zn(2+) is bound by residues Asn-367, His-456, and His-498. Asn-367 lines the substrate pocket. 498–500 is a substrate binding site; sequence HVH. Position 500 (His-500) interacts with Fe cation.

It belongs to the metallophosphoesterase superfamily. Purple acid phosphatase family. As to quaternary structure, homodimer. Fe cation is required as a cofactor. Zn(2+) serves as cofactor. In terms of tissue distribution, expressed in roots, stems, leaves, flowers and siliques.

Its subcellular location is the secreted. This is Probable inactive purple acid phosphatase 27 (PAP27) from Arabidopsis thaliana (Mouse-ear cress).